The chain runs to 489 residues: Cryptochrome DASH (489 aa).

Residues 6-140 (PTVLVWFRND…EAKGYWGSTL (135 aa)) enclose the Photolyase/cryptochrome alpha/beta domain.

This sequence belongs to the DNA photolyase class-1 family. FAD is required as a cofactor. It depends on (6R)-5,10-methylene-5,6,7,8-tetrahydrofolate as a cofactor.

Its function is as follows. May have a photoreceptor function. Binds DNA; represses transcription of at least 8 genes, including slr0364 and slr1866. Does not encode a DNA photolyase function. Its disruption does not affect circadian rhythm. This is Cryptochrome DASH (cry) from Synechocystis sp. (strain ATCC 27184 / PCC 6803 / Kazusa).